The chain runs to 95 residues: Osteocalcin 1 (95 aa).

The signal sequence occupies residues 1 to 21; that stretch reads MKTLSVLVLCSLAVLCLTSDA. Residues 22–50 constitute a propeptide that is removed on maturation; it reads SFSSQPAVDTPAQEGLFVEQEQASSVVRQ. The 47-residue stretch at 45–91 folds into the Gla domain; it reads SSVVRQAPKELSLSQLESLREVCELNLACEDMMDTSGIIAAYTTYYG. Positions 61, 65, and 68 each coordinate Ca(2+). 4-carboxyglutamate is present on residues Glu61, Glu65, and Glu68. Cys67 and Cys73 form a disulfide bridge.

The protein belongs to the osteocalcin/matrix Gla protein family. Post-translationally, gamma-carboxyglutamate residues are formed by vitamin K dependent carboxylation by GGCX. These residues are essential for the binding of calcium.

It is found in the secreted. Its function is as follows. The carboxylated form is one of the main organic components of the bone matrix, which constitutes 1-2% of the total bone protein. The carboxylated form binds strongly to apatite and calcium. The protein is Osteocalcin 1 of Solea senegalensis (Senegalese sole).